The primary structure comprises 183 residues: Translocon-associated protein subunit beta (183 aa).

A signal peptide spans M1–A17. Residues E18–D149 are Lumenal-facing. N-linked (GlcNAc...) asparagine glycosylation is found at N88 and N104. The chain crosses the membrane as a helical span at residues W150–Y169. The Cytoplasmic segment spans residues S170 to N183.

This sequence belongs to the TRAP-beta family. Heterotetramer of TRAP-alpha, TRAP-beta, TRAP-delta and TRAP-gamma. Interacts with STING1.

The protein localises to the endoplasmic reticulum membrane. Its function is as follows. TRAP proteins are part of a complex whose function is to bind calcium to the ER membrane and thereby regulate the retention of ER resident proteins. The polypeptide is Translocon-associated protein subunit beta (SSR2) (Homo sapiens (Human)).